The sequence spans 280 residues: Lacto-N-neotetraose biosynthesis glycosyltransferase LgtE (280 aa).

It belongs to the glycosyltransferase 25 family.

It functions in the pathway glycan metabolism; lacto-N-neotetraose biosynthesis. Its pathway is bacterial outer membrane biogenesis; lipooligosaccharide biosynthesis. Adds the first galactose to the lacto-N-tetraose chain in lipooligosaccharide (LOS). This is Lacto-N-neotetraose biosynthesis glycosyltransferase LgtE (lgtE) from Neisseria gonorrhoeae.